The chain runs to 531 residues: Transactivator/viroplasmin protein (531 aa).

Disordered stretches follow at residues 80–101 and 505–531; these read ASGKKPIAEGVSATSPEQTATG and CKSESSGPQTSEEGLQESEDEDFSVLV. Composition is skewed to polar residues over residues 91–100 and 505–517; these read SATSPEQTAT and CKSESSGPQTSEE. A compositionally biased stretch (acidic residues) spans 518–531; it reads GLQESEDEDFSVLV.

Belongs to the caulimoviridae viroplasmin family.

The protein resides in the host cytoplasm. Enhances the translation of downstream ORFs on polycistronic mRNAs. The protein is Transactivator/viroplasmin protein of Cestrum yellow leaf curling virus (CmYLCV).